The following is a 333-amino-acid chain: Adenosine deaminase (333 aa).

Zn(2+) is bound by residues His12 and His14. His14, Asp16, and Gly170 together coordinate substrate. Residue His197 participates in Zn(2+) binding. The active-site Proton donor is Glu200. Asp278 contributes to the Zn(2+) binding site. Asp279 provides a ligand contact to substrate.

Belongs to the metallo-dependent hydrolases superfamily. Adenosine and AMP deaminases family. Adenosine deaminase subfamily. It depends on Zn(2+) as a cofactor.

It carries out the reaction adenosine + H2O + H(+) = inosine + NH4(+). The catalysed reaction is 2'-deoxyadenosine + H2O + H(+) = 2'-deoxyinosine + NH4(+). In terms of biological role, catalyzes the hydrolytic deamination of adenosine and 2-deoxyadenosine. The sequence is that of Adenosine deaminase from Escherichia coli O157:H7.